The chain runs to 649 residues: Acetyl-coenzyme A synthetase (649 aa).

Residues 190–193 (RGGR) and Thr-310 contribute to the CoA site. ATP is bound by residues 386 to 388 (GEP), 410 to 415 (DTWWQT), Asp-499, and Arg-514. Position 522 (Ser-522) interacts with CoA. Arg-525 is a binding site for ATP. Residues Val-536, His-538, and Val-541 each contribute to the Mg(2+) site. Arg-583 is a binding site for CoA. Lys-608 carries the post-translational modification N6-acetyllysine.

This sequence belongs to the ATP-dependent AMP-binding enzyme family. Mg(2+) is required as a cofactor. Post-translationally, acetylated. Deacetylation by the SIR2-homolog deacetylase activates the enzyme.

It carries out the reaction acetate + ATP + CoA = acetyl-CoA + AMP + diphosphate. Functionally, catalyzes the conversion of acetate into acetyl-CoA (AcCoA), an essential intermediate at the junction of anabolic and catabolic pathways. AcsA undergoes a two-step reaction. In the first half reaction, AcsA combines acetate with ATP to form acetyl-adenylate (AcAMP) intermediate. In the second half reaction, it can then transfer the acetyl group from AcAMP to the sulfhydryl group of CoA, forming the product AcCoA. In Methylorubrum populi (strain ATCC BAA-705 / NCIMB 13946 / BJ001) (Methylobacterium populi), this protein is Acetyl-coenzyme A synthetase.